The following is a 305-amino-acid chain: uncharacterized protein (305 aa).

A disordered region spans residues 208–236; it reads SYAQSPAVKKKKWRHSGGKKNNPRENHID. Residues 215–225 are compositionally biased toward basic residues; that stretch reads VKKKKWRHSGG.

This is an uncharacterized protein from Bacillus subtilis (strain 168).